Consider the following 414-residue polypeptide: Histidine--tRNA ligase (414 aa).

It belongs to the class-II aminoacyl-tRNA synthetase family. In terms of assembly, homodimer.

It is found in the cytoplasm. It catalyses the reaction tRNA(His) + L-histidine + ATP = L-histidyl-tRNA(His) + AMP + diphosphate + H(+). This chain is Histidine--tRNA ligase, found in Endomicrobium trichonymphae.